The sequence spans 493 residues: NAD(P)H-quinone oxidoreductase chain 4, chloroplastic (493 aa).

Helical transmembrane passes span 4–24 (FPWLSIIILFPLFAAFFIPLL), 34–54 (WYTLGICLLDFLVMSYIFGYY), 87–107 (MGLILLTGLVTTLAVLAAWPI), 111–131 (PKLFYFLMLVMYSGQIGLFTS), 134–154 (LFLFFLMWELELIPIYLLISL), 167–187 (FIFYTAIGSLFLFIATFTVCF), 212–232 (ILYLGFGFAYAVKLPIIPFHT), 242–262 (HYSTCMLLAGILLKMGGYGWI), 276–296 (FAPWLVILGTVQIIYAASVCL), 313–333 (MGFVLIGICSFTNIGLSGAIC), 334–354 (QMISHGLIGASLFFLAGTTYD), 385–405 (SLALPTMSGFVAEMMIFLGII), 417–437 (FIILFQALGVILTPIYLLSML), and 462–482 (VFIIVSLFIPVIIIGLYPNIL).

The protein belongs to the complex I subunit 4 family.

The protein resides in the plastid. Its subcellular location is the chloroplast thylakoid membrane. It catalyses the reaction a plastoquinone + NADH + (n+1) H(+)(in) = a plastoquinol + NAD(+) + n H(+)(out). It carries out the reaction a plastoquinone + NADPH + (n+1) H(+)(in) = a plastoquinol + NADP(+) + n H(+)(out). This Chara vulgaris (Common stonewort) protein is NAD(P)H-quinone oxidoreductase chain 4, chloroplastic.